Here is a 169-residue protein sequence, read N- to C-terminus: Orotate phosphoribosyltransferase (169 aa).

Residues arginine 86, lysine 90, histidine 92, and 111–119 (EDVTTSGGS) each bind 5-phospho-alpha-D-ribose 1-diphosphate. Orotate-binding residues include threonine 115 and arginine 143.

Belongs to the purine/pyrimidine phosphoribosyltransferase family. PyrE subfamily. Homodimer. Mg(2+) is required as a cofactor.

It catalyses the reaction orotidine 5'-phosphate + diphosphate = orotate + 5-phospho-alpha-D-ribose 1-diphosphate. It functions in the pathway pyrimidine metabolism; UMP biosynthesis via de novo pathway; UMP from orotate: step 1/2. Functionally, catalyzes the transfer of a ribosyl phosphate group from 5-phosphoribose 1-diphosphate to orotate, leading to the formation of orotidine monophosphate (OMP). The sequence is that of Orotate phosphoribosyltransferase from Methanocorpusculum labreanum (strain ATCC 43576 / DSM 4855 / Z).